Consider the following 298-residue polypeptide: Small ribosomal subunit protein uS3 (298 aa).

Residues 39–107 (VREYLKAKLK…PVAVNIEEVR (69 aa)) enclose the KH type-2 domain. The segment at 214-298 (PAAVEARTDE…PAAAADGKGE (85 aa)) is disordered. Residues 219-245 (ARTDEERRPRGPRRDDRGARPGADRPA) are compositionally biased toward basic and acidic residues. The segment covering 277-298 (KPAVQRVRKVAAPAAAADGKGE) has biased composition (low complexity).

It belongs to the universal ribosomal protein uS3 family. In terms of assembly, part of the 30S ribosomal subunit. Forms a tight complex with proteins S10 and S14.

Functionally, binds the lower part of the 30S subunit head. Binds mRNA in the 70S ribosome, positioning it for translation. The polypeptide is Small ribosomal subunit protein uS3 (Albidiferax ferrireducens (strain ATCC BAA-621 / DSM 15236 / T118) (Rhodoferax ferrireducens)).